Consider the following 392-residue polypeptide: Pyoverdine export membrane fusion protein PvdR (392 aa).

The tat-type signal signal peptide spans 1 to 36; sequence MRRSTHTRRRLLLGGLGLLGLGSLLAWTSLPFGAQP. Positions 109 to 181 form a coiled coil; that stretch reads IDNLKAQLAE…NASLRSDEAE (73 aa). Positions 267–286 are disordered; that stretch reads PPKPLDQTSQGGGSPASATA.

This sequence belongs to the membrane fusion protein (MFP) (TC 8.A.1) family. As to quaternary structure, part of the tripartite efflux system PvdRT-OpmQ, which is composed of an inner membrane component with both ATPase and permease domains, PvdT, a periplasmic membrane fusion protein, PvdR, and an outer membrane component, OpmQ. In terms of processing, predicted to be exported by the Tat system. The position of the signal peptide cleavage has not been experimentally proven.

It is found in the periplasm. Functionally, part of the tripartite efflux system PvdRT-OpmQ required for the secretion into the extracellular milieu of the siderophore pyoverdine (PVD), which is involved in iron acquisition. This subunit is an adapter protein that stimulates the ATPase activity of PvdT and connects the inner and outer membrane components. The system is responsible for export of newly synthesized PVD after the final steps of biosynthesis have taken place in the periplasm. It is also responsible for recycling of PVD after internalization of ferri-PVD into the periplasm by the outer-membrane receptor FpvA and release of iron from PVD, thus making PVD available for new cycles of iron uptake. Contributes to resistance against ampicillin. In Pseudomonas putida (strain ATCC 47054 / DSM 6125 / CFBP 8728 / NCIMB 11950 / KT2440), this protein is Pyoverdine export membrane fusion protein PvdR.